The primary structure comprises 260 residues: Ribose-5-phosphate isomerase A (260 aa).

Substrate-binding positions include 33–36 (TGST), 89–92 (DGAD), and 102–105 (KGGG). Residue glutamate 111 is the Proton acceptor of the active site. Lysine 129 serves as a coordination point for substrate.

This sequence belongs to the ribose 5-phosphate isomerase family. In terms of assembly, homodimer.

It catalyses the reaction aldehydo-D-ribose 5-phosphate = D-ribulose 5-phosphate. It participates in carbohydrate degradation; pentose phosphate pathway; D-ribose 5-phosphate from D-ribulose 5-phosphate (non-oxidative stage): step 1/1. In terms of biological role, catalyzes the reversible conversion of ribose-5-phosphate to ribulose 5-phosphate. The sequence is that of Ribose-5-phosphate isomerase A from Dinoroseobacter shibae (strain DSM 16493 / NCIMB 14021 / DFL 12).